A 459-amino-acid chain; its full sequence is UDP-N-acetylmuramoyl-tripeptide--D-alanyl-D-alanine ligase (459 aa).

Residue 121–127 (GSSGKTT) participates in ATP binding.

Belongs to the MurCDEF family. MurF subfamily.

The protein localises to the cytoplasm. It catalyses the reaction D-alanyl-D-alanine + UDP-N-acetyl-alpha-D-muramoyl-L-alanyl-gamma-D-glutamyl-meso-2,6-diaminopimelate + ATP = UDP-N-acetyl-alpha-D-muramoyl-L-alanyl-gamma-D-glutamyl-meso-2,6-diaminopimeloyl-D-alanyl-D-alanine + ADP + phosphate + H(+). Its pathway is cell wall biogenesis; peptidoglycan biosynthesis. Functionally, involved in cell wall formation. Catalyzes the final step in the synthesis of UDP-N-acetylmuramoyl-pentapeptide, the precursor of murein. The chain is UDP-N-acetylmuramoyl-tripeptide--D-alanyl-D-alanine ligase from Treponema pallidum (strain Nichols).